The following is a 264-amino-acid chain: 3-methyl-2-oxobutanoate hydroxymethyltransferase (264 aa).

2 residues coordinate Mg(2+): aspartate 45 and aspartate 84. 3-methyl-2-oxobutanoate contacts are provided by residues 45 to 46, aspartate 84, and lysine 112; that span reads DS. Glutamate 114 is a binding site for Mg(2+). The active-site Proton acceptor is the glutamate 181.

Belongs to the PanB family. As to quaternary structure, homodecamer; pentamer of dimers. Mg(2+) is required as a cofactor.

The protein localises to the cytoplasm. The enzyme catalyses 3-methyl-2-oxobutanoate + (6R)-5,10-methylene-5,6,7,8-tetrahydrofolate + H2O = 2-dehydropantoate + (6S)-5,6,7,8-tetrahydrofolate. It participates in cofactor biosynthesis; (R)-pantothenate biosynthesis; (R)-pantoate from 3-methyl-2-oxobutanoate: step 1/2. Catalyzes the reversible reaction in which hydroxymethyl group from 5,10-methylenetetrahydrofolate is transferred onto alpha-ketoisovalerate to form ketopantoate. In Escherichia fergusonii (strain ATCC 35469 / DSM 13698 / CCUG 18766 / IAM 14443 / JCM 21226 / LMG 7866 / NBRC 102419 / NCTC 12128 / CDC 0568-73), this protein is 3-methyl-2-oxobutanoate hydroxymethyltransferase.